Here is a 344-residue protein sequence, read N- to C-terminus: Nicotinate-nucleotide--dimethylbenzimidazole phosphoribosyltransferase (344 aa).

Catalysis depends on Glu311, which acts as the Proton acceptor.

Belongs to the CobT family.

It catalyses the reaction 5,6-dimethylbenzimidazole + nicotinate beta-D-ribonucleotide = alpha-ribazole 5'-phosphate + nicotinate + H(+). It participates in nucleoside biosynthesis; alpha-ribazole biosynthesis; alpha-ribazole from 5,6-dimethylbenzimidazole: step 1/2. Catalyzes the synthesis of alpha-ribazole-5'-phosphate from nicotinate mononucleotide (NAMN) and 5,6-dimethylbenzimidazole (DMB). The sequence is that of Nicotinate-nucleotide--dimethylbenzimidazole phosphoribosyltransferase from Aromatoleum aromaticum (strain DSM 19018 / LMG 30748 / EbN1) (Azoarcus sp. (strain EbN1)).